A 277-amino-acid chain; its full sequence is Putative acetylornithine deacetylase (277 aa).

The catalysed reaction is N(2)-acetyl-L-ornithine + H2O = L-ornithine + acetate. It participates in amino-acid biosynthesis; L-arginine biosynthesis; L-ornithine from N(2)-acetyl-L-ornithine (linear): step 1/1. The sequence is that of Putative acetylornithine deacetylase (argE) from Leptospira biflexa.